Here is a 60-residue protein sequence, read N- to C-terminus: Cytochrome c oxidase subunit 9, mitochondrial (60 aa).

At Met-1 to Asp-18 the chain is on the mitochondrial matrix side. A helical membrane pass occupies residues Ile-19 to Phe-37. Residues His-38–Ala-57 lie on the Mitochondrial intermembrane side of the membrane. Residues Ala-58 to Glu-60 constitute a propeptide, removed in mature form.

This sequence belongs to the fungal cytochrome c oxidase subunit 7a family. As to quaternary structure, component of the cytochrome c oxidase (complex IV, CIV), a multisubunit enzyme composed of a catalytic core of 3 subunits and several supernumerary subunits. The complex exists as a monomer or a dimer and forms supercomplexes (SCs) in the inner mitochondrial membrane with ubiquinol-cytochrome c oxidoreductase (cytochrome b-c1 complex, complex III, CIII).

The protein resides in the mitochondrion inner membrane. Its pathway is energy metabolism; oxidative phosphorylation. Its function is as follows. Component of the cytochrome c oxidase, the last enzyme in the mitochondrial electron transport chain which drives oxidative phosphorylation. The respiratory chain contains 3 multisubunit complexes succinate dehydrogenase (complex II, CII), ubiquinol-cytochrome c oxidoreductase (cytochrome b-c1 complex, complex III, CIII) and cytochrome c oxidase (complex IV, CIV), that cooperate to transfer electrons derived from NADH and succinate to molecular oxygen, creating an electrochemical gradient over the inner membrane that drives transmembrane transport and the ATP synthase. Cytochrome c oxidase is the component of the respiratory chain that catalyzes the reduction of oxygen to water. Electrons originating from reduced cytochrome c in the intermembrane space (IMS) are transferred via the dinuclear copper A center (CU(A)) of subunit 2 and heme A of subunit 1 to the active site in subunit 1, a binuclear center (BNC) formed by heme A3 and copper B (CU(B)). The BNC reduces molecular oxygen to 2 water molecules using 4 electrons from cytochrome c in the IMS and 4 protons from the mitochondrial matrix. This Eremothecium gossypii (strain ATCC 10895 / CBS 109.51 / FGSC 9923 / NRRL Y-1056) (Yeast) protein is Cytochrome c oxidase subunit 9, mitochondrial (COX9).